A 133-amino-acid polypeptide reads, in one-letter code: Ribosome-binding factor A (133 aa).

It belongs to the RbfA family. Monomer. Binds 30S ribosomal subunits, but not 50S ribosomal subunits or 70S ribosomes.

It localises to the cytoplasm. Its function is as follows. One of several proteins that assist in the late maturation steps of the functional core of the 30S ribosomal subunit. Associates with free 30S ribosomal subunits (but not with 30S subunits that are part of 70S ribosomes or polysomes). Required for efficient processing of 16S rRNA. May interact with the 5'-terminal helix region of 16S rRNA. This Chlamydia muridarum (strain MoPn / Nigg) protein is Ribosome-binding factor A.